A 169-amino-acid chain; its full sequence is Peptide methionine sulfoxide reductase MsrA (169 aa).

C10 is an active-site residue.

The protein belongs to the MsrA Met sulfoxide reductase family.

It carries out the reaction L-methionyl-[protein] + [thioredoxin]-disulfide + H2O = L-methionyl-(S)-S-oxide-[protein] + [thioredoxin]-dithiol. The enzyme catalyses [thioredoxin]-disulfide + L-methionine + H2O = L-methionine (S)-S-oxide + [thioredoxin]-dithiol. In terms of biological role, has an important function as a repair enzyme for proteins that have been inactivated by oxidation. Catalyzes the reversible oxidation-reduction of methionine sulfoxide in proteins to methionine. This is Peptide methionine sulfoxide reductase MsrA from Streptococcus pyogenes serotype M3 (strain ATCC BAA-595 / MGAS315).